The sequence spans 205 residues: ATP-dependent Clp protease proteolytic subunit (205 aa).

Catalysis depends on Ser109, which acts as the Nucleophile. His134 is a catalytic residue.

It belongs to the peptidase S14 family. As to quaternary structure, fourteen ClpP subunits assemble into 2 heptameric rings which stack back to back to give a disk-like structure with a central cavity, resembling the structure of eukaryotic proteasomes.

It is found in the cytoplasm. The catalysed reaction is Hydrolysis of proteins to small peptides in the presence of ATP and magnesium. alpha-casein is the usual test substrate. In the absence of ATP, only oligopeptides shorter than five residues are hydrolyzed (such as succinyl-Leu-Tyr-|-NHMec, and Leu-Tyr-Leu-|-Tyr-Trp, in which cleavage of the -Tyr-|-Leu- and -Tyr-|-Trp bonds also occurs).. Functionally, cleaves peptides in various proteins in a process that requires ATP hydrolysis. Has a chymotrypsin-like activity. Plays a major role in the degradation of misfolded proteins. This chain is ATP-dependent Clp protease proteolytic subunit, found in Buchnera aphidicola subsp. Baizongia pistaciae (strain Bp).